Consider the following 624-residue polypeptide: Iron transport multicopper oxidase FET3 (624 aa).

The N-terminal stretch at 1-20 (MRTFLSSFIILTTFLASLIA) is a signal peptide. The Extracellular portion of the chain corresponds to 21-555 (AETHTWYFKT…KRLPTGFTTK (535 aa)). 2 Plastocyanin-like domains span residues 46–144 (IGFN…FIIE) and 190–292 (NFLF…LQVN). N49 and N77 each carry an N-linked (GlcNAc...) asparagine glycan. The Cu cation site is built by H81 and H83. Residue N113 is glycosylated (N-linked (GlcNAc...) asparagine). Cu cation-binding residues include H126 and H128. Residues N194, N198, N244, N265, N292, N300, and N359 are each glycosylated (N-linked (GlcNAc...) asparagine). One can recognise a Plastocyanin-like 3 domain in the interval 382 to 499 (NELIYGTNTN…QGLAVVLIED (118 aa)). Residues H413, H416, and H418 each coordinate Cu cation. A glycan (N-linked (GlcNAc...) asparagine) is linked at N441. 4 residues coordinate Cu cation: H481, C482, H483, and H487. The helical transmembrane segment at 556–576 (GIVALVFSCVAAFLGLFSFSF) threads the bilayer. Residues 577 to 624 (YGMNDIAHVEDKVARDLDIDLEAENEDEEEAVVLNQNSSSSDSNSKPH) lie on the Cytoplasmic side of the membrane. The segment at 603 to 624 (DEEEAVVLNQNSSSSDSNSKPH) is disordered. Residues 608–624 (VVLNQNSSSSDSNSKPH) are compositionally biased toward low complexity.

It belongs to the multicopper oxidase family. Cu cation is required as a cofactor.

The protein localises to the cell membrane. Iron transport multicopper ferroxidase required for Fe(2+) high affinity uptake. Required to oxidize Fe(2+) and release it from the transporter. Essential component of copper-dependent iron transport. This is Iron transport multicopper oxidase FET3 (FET3) from Candida albicans (Yeast).